Here is a 517-residue protein sequence, read N- to C-terminus: Glutamate--cysteine ligase (517 aa).

This sequence belongs to the glutamate--cysteine ligase type 1 family. Type 1 subfamily.

The enzyme catalyses L-cysteine + L-glutamate + ATP = gamma-L-glutamyl-L-cysteine + ADP + phosphate + H(+). Its pathway is sulfur metabolism; glutathione biosynthesis; glutathione from L-cysteine and L-glutamate: step 1/2. The sequence is that of Glutamate--cysteine ligase from Pectobacterium atrosepticum (strain SCRI 1043 / ATCC BAA-672) (Erwinia carotovora subsp. atroseptica).